A 400-amino-acid chain; its full sequence is MQMSTVCLALGLALVFGEASASYLHETRAAELATDFGVKVFKQVAQASKDRNMVFSPYGLASVLAMLQLTTAGETRQQIQEAMRFQIDEKGMAPALRQLYKELMGPWNKDEISTADAIFVQRDLKLVHGFMPYFFRLFQTTVKQVDFSEVERARFIINDWVKRHTKGMIGDLLGRGTVDQLTRLMLVNALYFNGQWKTPFPKSGTHHRLFHKSDGSTVSVPMMAQTNKFNYTEFSTPEGRYYDILELPYHGDTLSMFIAAPYEKDVPLSALTNILDAQLISQWKGNMTRRLRLLVLPKFSLESEVNLRGPLENLGMTDMFRPNQADFSSLSDQEALYVSQALQKVKIEVNESGTVASSSTAIIVSARMAPEEIIMDRPFLFVVRHNPTGTVLFMGQVMEP.

Positions 1–21 (MQMSTVCLALGLALVFGEASA) are cleaved as a signal peptide. N-linked (GlcNAc...) asparagine glycans are attached at residues asparagine 230, asparagine 286, and asparagine 350.

Belongs to the serpin family. In terms of assembly, forms a heterodimer with TMPRSS7. Interacts with VTN. Binds LRP1B; binding is followed by internalization and degradation. Interacts with PPP1CB. In complex with PLAU/uPA, interacts with PLAUR/uPAR. Interacts with SORL1 and LRP1, either alone or in complex with PLAU; these interactions are abolished in the presence of LRPAP1/RAP. The ternary complex composed of PLAUR-PLAU-PAI1 also interacts with SORL1. Interacts with PLAT/tPA. Also interacts with SORL1, when complexed to PLAT/tPA.

The protein resides in the secreted. Serine protease inhibitor. Inhibits TMPRSS7. Is a primary inhibitor of tissue-type plasminogen activator (PLAT) and urokinase-type plasminogen activator (PLAU). As PLAT inhibitor, it is required for fibrinolysis down-regulation and is responsible for the controlled degradation of blood clots. As PLAU inhibitor, it is involved in the regulation of cell adhesion and spreading. Acts as a regulator of cell migration, independently of its role as protease inhibitor. It is required for stimulation of keratinocyte migration during cutaneous injury repair. It is involved in cellular and replicative senescence. Plays a role in alveolar type 2 cells senescence in the lung. Is involved in the regulation of cementogenic differentiation of periodontal ligament stem cells, and regulates odontoblast differentiation and dentin formation during odontogenesis. The sequence is that of Plasminogen activator inhibitor 1 (SERPINE1) from Neovison vison (American mink).